The following is an 868-amino-acid chain: DNA mismatch repair protein MutS (868 aa).

620–627 (GPNMGGKS) is an ATP binding site.

It belongs to the DNA mismatch repair MutS family.

Functionally, this protein is involved in the repair of mismatches in DNA. It is possible that it carries out the mismatch recognition step. This protein has a weak ATPase activity. The chain is DNA mismatch repair protein MutS from Desulforamulus reducens (strain ATCC BAA-1160 / DSM 100696 / MI-1) (Desulfotomaculum reducens).